Reading from the N-terminus, the 5376-residue chain is Zonadhesin (5376 aa).

A signal peptide spans 1–17; it reads MALPVWTLMLLVGAAWG. At 18-5310 the chain is on the extracellular side; it reads QEQVPAWRPN…TTRKKIEASS (5293 aa). MAM domains lie at 45–210, 215–374, and 377–542; these read SKCD…TCNQ, QMCT…PCGE, and PQCD…PCRV. N-linked (GlcNAc...) asparagine glycosylation is found at N339 and N499. The segment at 547–1170 is 80 X heptapeptide repeats (approximate) (mucin-like domain); that stretch reads EIPSSPLLPP…PTTGVSTTES (624 aa). 2 disordered regions span residues 553–579 and 1037–1113; these read LLPP…TKAT and TVPP…TVST. Low complexity predominate over residues 1052-1113; sequence TEVTTTPPEE…IASEETTVST (62 aa). In terms of domain architecture, TIL 1 spans 1171–1220; it reads CPPNAHIELCACPASCESPKPSCQPPCIPGCVCNPGFLFSNNQCINESSC. N-linked (GlcNAc...) asparagine glycosylation is found at N1216, N1239, and N1314. Residues 1227–1275 enclose the VWFC 1 domain; the sequence is KHYKPGEEWFTPNCTERCRCLPGSLMECQISQCGTHTVCQLKSDQYQCE. The VWFD 1 domain maps to 1280-1462; the sequence is ATCLVYGDLH…DKDWVSSRCQ (183 aa). 2 disulfides stabilise this stretch: C1282/C1417 and C1304/C1461. The 54-residue stretch at 1555–1608 folds into the TIL 2 domain; it reads CPKNSRYSLCAKPCPETCHPISTTQHCSDKCVEGCECDPGFILSGSECVPSSQC. The region spanning 1609–1664 is the VWFC 2 domain; the sequence is GCTSFQGRYFKLQEQWFNPDCKEICTCESHNHILCKPWKCKAQEACSYKNGVLGCH. A VWFD 2 domain is found at 1669–1849; that stretch reads ATCMVSGDPH…ILEASDPGCF (181 aa). 2 cysteine pairs are disulfide-bonded: C1671/C1809 and C1693/C1848. N-linked (GlcNAc...) asparagine glycosylation is found at N1814, N1908, and N1933. Residues 1941 to 1995 enclose the TIL 3 domain; that stretch reads CPPRSSYNPCANSCPATCLTLSTPRDCPTLPCVEGCECQSGHILSGTTCVPLRQC. Residues 1996 to 2052 form the VWFC 3 domain; the sequence is GCSDQDGSYHLLGESWYTEKTCTTLCTCSAHSNITCSPTACKANHVCLRQEGLLRCA. N-linked (GlcNAc...) asparagine glycans are attached at residues N2028, N2111, N2142, and N2332. A VWFD 3 domain is found at 2056-2239; that stretch reads GECRISEDSQ…KDKSMDPNCQ (184 aa). 2 disulfide bridges follow: C2058–C2200 and C2080–C2238. A TIL 4 domain is found at 2340–2398; sequence CPAHSHYTNCLPSCPPSCLDPDSRCEGSGHKVPATCREGCICQPDYVLLNDKCVLRSHC. The VWFC 4 domain maps to 2399–2454; it reads GCKDAQGVFIPAGKTWISEDCTQSCTCMKGSMRCWDFQCPPGTYCKNSNDGSSNCV. In terms of domain architecture, TIL 5 spans 2460–2518; the sequence is CPAHSKFTDCLPPCHPSCSDPDGHCEGISTNAHSNCKEGCVCQPGYVLRNDKCVLRIEC. The VWFC 5 domain maps to 2519 to 2574; sequence GCQHTQGGFIPAGKNWTSRGCSQSCDCMEGVIRCQNFQCPSGTYCQDIEDGTSNCA. N-linked (GlcNAc...) asparagine glycans are attached at residues N2533 and N2575. The TIL 6 domain occupies 2580 to 2638; that stretch reads CPAHSSFTNCLPPCQPSCSDPEGHCGGSTTKAPSACQEGCVCEPDYVVLNNKCVPRIEC. Positions 2639-2694 constitute a VWFC 6 domain; that stretch reads GCKDAQGVLIPADKIWINKGCTQTCACVTGTIHCRDFQCPSGTYCKDIKDDASNCT. The N-linked (GlcNAc...) asparagine glycan is linked to N2692. The TIL 7 domain occupies 2700–2758; that stretch reads CPDHSLYTHCLPSCLLSCSDPDGLCRGTSPEAPSTCKEGCVCDPDYVLSNDKCVLRIEC. Residues 2759–2814 enclose the VWFC 7 domain; the sequence is GCKDAQGVLIPAGKTWINRGCTQSCSCMGGAIQCQNFKCPSEAYCQDMEDGNSNCT. N2812 carries N-linked (GlcNAc...) asparagine glycosylation. A TIL 8 domain is found at 2820 to 2878; that stretch reads CPAHSHYTNCLPTCQPSCSDPDGHCEGSSTKAPSACKEGCVCEPDYVMLNNKCVPRIEC. The 56-residue stretch at 2879 to 2934 folds into the VWFC 8 domain; sequence GCKDTQGVLIPADKTWINRGCTQSCTCRGGAIQCQKYHCSSGTYCKDMEDDSSSCA. The 59-residue stretch at 2940–2998 folds into the TIL 9 domain; sequence CPAHSHFTNCLPPCQPSCLDSEGHCEGSTTKAPSACQEGCVCEPDYVVLNNKCVPRIEC. The 56-residue stretch at 2999-3054 folds into the VWFC 9 domain; that stretch reads GCKDAQGVLIPADKTWINRGCTQSCTCKGGAIQCQKFQCPSETYCKDIEDGNSNCT. N3052, N3065, N3144, and N3172 each carry an N-linked (GlcNAc...) asparagine glycan. Residues 3060–3118 enclose the TIL 10 domain; it reads CPANSNFTSCLPSCQPSCSNTDVHCEGSSPNTLSSCREGCVCQSGYVLHNDKCILRNQC. The 56-residue stretch at 3119–3174 folds into the VWFC 10 domain; the sequence is GCKDAQGALIPEGKTWITSGCTQSCNCTGGAIQCQNFQCPLKTYCKDLKDGSSNCT. A TIL 11 domain is found at 3180–3238; the sequence is CPAHSRYTNCLPSCPPLCLDPEGLCEGTSPKVPSTCREGCICQPGYLMHKNKCVLRIFC. Positions 3239 to 3294 constitute a VWFC 11 domain; the sequence is GCKNTQGAFISADKTWISRGCTQSCTCPAGAIHCRNFKCPSGTYCKNGDNGSSNCT. N3288 and N3292 each carry an N-linked (GlcNAc...) asparagine glycan. Residues 3300–3355 form the TIL 12 domain; that stretch reads CPTNSQFTDCLPSCVPSCSNRCEVTSPSVPSSCREGCLCNHGFVFSEDKCVPRTQC. A VWFC 12 domain is found at 3356-3411; sequence GCKDARGAIIPAGKTWTSKGCTQSCACVEGNIQCQNFQCPPETYCKDNSEGSSTCT. One can recognise a TIL 13 domain in the interval 3417–3475; it reads CPAHTQYTSCLPSCLPSCLDPEGLCKDISPKVPSTCKEGCVCQSGYVLNSDKCVLRAEC. Residues 3476–3531 form the VWFC 13 domain; sequence DCKDAQGALIPAGKTWTSPGCTQSCACMGGAVQCQSSQCPPGTYCKDNEDGNSNCA. The 59-residue stretch at 3537–3595 folds into the TIL 14 domain; sequence CPAHSLFTNCLPPCLPSCLDPDGLCKGASPKVPSTCKEGCICQSGYVLSNNKCLLRNRC. The VWFC 14 domain maps to 3596–3651; that stretch reads GCKDAHGALIPEDKTWVSRGCTQSCVCTGGSIQCLSSQCPPGAYCKDNEDGSSNCA. The TIL 15 domain maps to 3657-3715; the sequence is CPANSHYTDCFPPCPPSCSDPEGHCEASGPRVLSTCREGCLCNPGFVLDRDKCVPRVEC. Positions 3716 to 3771 constitute a VWFC 15 domain; sequence GCKDAQGALIPSGKTWTSPGCTQSCACMGGVVQCQSSQCPPGTYCKDNEDGNSNCA. Positions 3777 to 3835 constitute a TIL 16 domain; sequence CPTHSNYTDCLPFCLPSCLDPSALCGGTSPKGPSTCKEGCVCQPGYVLDKDKCILKIEC. N3782 carries N-linked (GlcNAc...) asparagine glycosylation. In terms of domain architecture, VWFC 16 spans 3836–3891; it reads GCRDTQGAVIPAGKTWLSTGCIQSCACVEGTIQCQNFQCPPGTYCNHNNNCAKIPL. One can recognise a TIL 17 domain in the interval 3893-3951; it reads CPAHSHFTSCLPSCPPSCANLDGSCEQTSPKVPSTCKEGCLCQPGYFLNNGKCVLQTHC. Residues 3952–4007 enclose the VWFC 17 domain; the sequence is DCKDAEGGLVPAGKTWTSKDCTQSCACTGGAVQCQNFQCPLGTYCKDSGDGSSNCT. N-linked (GlcNAc...) asparagine glycosylation occurs at N4005. The TIL 18 domain occupies 4029 to 4087; the sequence is CPAHSHFTSCLPSCPPSCSNLDGSCVESNFKAPSVCKKGCICQPGYLLNNDKCVLRIQC. Residues 4088–4143 enclose the VWFC 18 domain; that stretch reads GCKDTQGGLIPAGRTWISSDCTKSCSCMGGIIQCRDFQCPPGTYCKESNDSSRTCA. An N-linked (GlcNAc...) asparagine glycan is attached at N4136. One can recognise a TIL 19 domain in the interval 4149-4207; it reads CPAHSHYTNCLPACSRSCTDLDGHCEGTSPKVPSPCKEGCLCQPGYVVHNHKCVLQIHC. The VWFC 19 domain occupies 4208 to 4262; it reads GCKDAQGGFVPAGKTWISRGCTQSCACVGGAVQCHNFTCPTGTQCQNSSCSKITV. N-linked (GlcNAc...) asparagine glycans are attached at residues N4243 and N4254. The region spanning 4264–4322 is the TIL 20 domain; it reads CPAHSQYTTCLPSCLPSCFDPEGLCGGASPRAPSTCREGCVCEADYVLREDKCVLRTQC. One can recognise a VWFC 20 domain in the interval 4323-4378; that stretch reads GCKDAQGDLIPANKTWLTRGCAQKCTCKGGNIHCWNFKCPLGTECKDSVDGGSNCT. Residues N4335 and N4376 are each glycosylated (N-linked (GlcNAc...) asparagine). The TIL 21 domain maps to 4384-4442; sequence CPAHSHHTYCLPSCIPSCSNVNDRCESTSLQRPSTCIEGCLCHSGFVFSKDKCVPRTQC. One can recognise a VWFC 21 domain in the interval 4443–4498; that stretch reads GCKDSQGTLIPAGKNWITTGCSQRCTCTGGLVQCHDFQCPSGAECQDIEDGNSNCV. The TIL 22 domain occupies 4504–4562; that stretch reads CPAHSHYSKCLPPCQPSCSDPDGHCEGTSPEAPSTCEEGCVCEPDYVLSNDKCVPSSEC. Positions 4563 to 4618 constitute a VWFC 22 domain; sequence GCKDAHGVLIPESKTWVSRGCTKNCTCKGGTVQCHDFSCPTGSRCLDNNEGNSNCV. A glycan (N-linked (GlcNAc...) asparagine) is linked at N4586. The TIL 23 domain occupies 4624-4682; sequence CPAHSLYTNCLPSCLPSCSDPEGLCGGTSPEVPSTCKEGCICQSGYVLHKNKCMLRIHC. Residues 4683-4738 enclose the VWFC 23 domain; that stretch reads DCKDFQGSLIKTGQTWISSGCSKICTCKGGFFQCQSYKCPSGTQCEESEDGSSNCV. The TIL 24 domain occupies 4744–4802; sequence CPANSLYTHCLPTCLPSCSNPDGRCEGTSHKAPSTCREGCVCQPGYLLNKDTCVHKNQC. A VWFC 24 domain is found at 4803-4858; that stretch reads GCKDIRGNIIPAGNTWISSDCTQSCACTDGVIQCQNFVCPSGSHCQYNEDGSSDCA. Residues 4863 to 5038 form the VWFD 4 domain; that stretch reads ERCTIFGDPY…SWEVKAQHAF (176 aa). C4865 and C5001 form a disulfide bridge. The N-linked (GlcNAc...) asparagine glycan is linked to N5136. The TIL 25 domain occupies 5150-5203; the sequence is CPANTVYQRCMTPCPASCAKFVTPKVCEGPCVEGCASLPGYIYSDTQSLPVTHC. The VWFC 25 domain maps to 5204–5258; sequence GCTADGIYYKLGDSFVTNDCSQHCTCASQGILLCEPYGCRAGESCMVANFTRGCF. N-linked (GlcNAc...) asparagine glycosylation is present at N5252. One can recognise an EGF-like domain in the interval 5259-5295; that stretch reads QDSPCLQNPCHNDGRCEEQGATFICHCDFGYGGEFCT. Intrachain disulfides connect C5263-C5274, C5268-C5283, and C5285-C5294. Residues 5311-5337 form a helical membrane-spanning segment; it reads LVAILPGVLVMVLVPVLLPRVYVYMAT. At 5338–5376 the chain is on the cytoplasmic side; the sequence is RTTMGRRRMKRKEKKLLRQSRLRLEDADVPEPTFKATEF.

Probably forms covalent oligomers. In terms of tissue distribution, in testis, primarily in haploid spermatids.

The protein resides in the cell membrane. In terms of biological role, binds in a species-specific manner to the zona pellucida of the egg. May be involved in gamete recognition and/or signaling. This chain is Zonadhesin (Zan), found in Mus musculus (Mouse).